The following is a 354-amino-acid chain: Uroporphyrinogen decarboxylase (354 aa).

Substrate contacts are provided by residues 27–31, Phe46, Asp77, Tyr154, Thr209, and His327; that span reads RQAGR.

The protein belongs to the uroporphyrinogen decarboxylase family. Homodimer.

The protein resides in the cytoplasm. It catalyses the reaction uroporphyrinogen III + 4 H(+) = coproporphyrinogen III + 4 CO2. It participates in porphyrin-containing compound metabolism; protoporphyrin-IX biosynthesis; coproporphyrinogen-III from 5-aminolevulinate: step 4/4. Functionally, catalyzes the decarboxylation of four acetate groups of uroporphyrinogen-III to yield coproporphyrinogen-III. The polypeptide is Uroporphyrinogen decarboxylase (Photorhabdus laumondii subsp. laumondii (strain DSM 15139 / CIP 105565 / TT01) (Photorhabdus luminescens subsp. laumondii)).